Reading from the N-terminus, the 304-residue chain is Homoserine O-succinyltransferase (304 aa).

Cys-142 serves as the catalytic Acyl-thioester intermediate. Substrate is bound by residues Lys-163 and Ser-192. His-235 (proton acceptor) is an active-site residue. Glu-237 is a catalytic residue. Substrate is bound at residue Arg-249.

Belongs to the MetA family.

Its subcellular location is the cytoplasm. The catalysed reaction is L-homoserine + succinyl-CoA = O-succinyl-L-homoserine + CoA. It participates in amino-acid biosynthesis; L-methionine biosynthesis via de novo pathway; O-succinyl-L-homoserine from L-homoserine: step 1/1. Transfers a succinyl group from succinyl-CoA to L-homoserine, forming succinyl-L-homoserine. The sequence is that of Homoserine O-succinyltransferase from Blochmanniella pennsylvanica (strain BPEN).